Here is a 133-residue protein sequence, read N- to C-terminus: ATP synthase epsilon chain, chloroplastic (133 aa).

It belongs to the ATPase epsilon chain family. F-type ATPases have 2 components, CF(1) - the catalytic core - and CF(0) - the membrane proton channel. CF(1) has five subunits: alpha(3), beta(3), gamma(1), delta(1), epsilon(1). CF(0) has three main subunits: a, b and c.

Its subcellular location is the plastid. The protein resides in the chloroplast thylakoid membrane. Produces ATP from ADP in the presence of a proton gradient across the membrane. The chain is ATP synthase epsilon chain, chloroplastic from Ipomoea batatas (Sweet potato).